The primary structure comprises 423 residues: MSSYINKNQSVEILCIGSELLLGNILNSNAKWLAEQLAFIGLPHYLQSVVGDNSQRLLRIILEASRRSRVLITTGGLGPTPDDLTIETIASAFNVKLTKNNDILKDIKRKLNSHSHVSENNFKQALLPEGAEIIPNKSGTAPGIIWTPIVDFTIISLPGVPAEMKQMWIETAKPWLNVNFPERKSLTSKTLKFAGISESFLAENIVDLLDNKNPTIAPYASLGEVKLRLTAQAKTTSEAKRLIEPIEVELLKRFGLKCFAKNDETLSEIVIGLLSKRGETISLAESCTGGNLAAAFTGTPGASEVFLGGIVAYNNSIKENVLGVPIELIKKHGAVSQPVAKEMALGILKIFNTDWSIAISGIAGPSGSTLNKPIGRVEIFIAGPNVNESIQENFGSYRAREEIQKLSVVRALDQLRLFLLRRS.

It belongs to the CinA family.

The polypeptide is CinA-like protein (Prochlorococcus marinus (strain SARG / CCMP1375 / SS120)).